A 265-amino-acid chain; its full sequence is Leucyl/phenylalanyl-tRNA--protein transferase (265 aa).

Residues 244–265 (LDTGPDPASSSVTEISLRPAAP) form a disordered region.

This sequence belongs to the L/F-transferase family.

The protein localises to the cytoplasm. It catalyses the reaction N-terminal L-lysyl-[protein] + L-leucyl-tRNA(Leu) = N-terminal L-leucyl-L-lysyl-[protein] + tRNA(Leu) + H(+). The enzyme catalyses N-terminal L-arginyl-[protein] + L-leucyl-tRNA(Leu) = N-terminal L-leucyl-L-arginyl-[protein] + tRNA(Leu) + H(+). The catalysed reaction is L-phenylalanyl-tRNA(Phe) + an N-terminal L-alpha-aminoacyl-[protein] = an N-terminal L-phenylalanyl-L-alpha-aminoacyl-[protein] + tRNA(Phe). Its function is as follows. Functions in the N-end rule pathway of protein degradation where it conjugates Leu, Phe and, less efficiently, Met from aminoacyl-tRNAs to the N-termini of proteins containing an N-terminal arginine or lysine. This is Leucyl/phenylalanyl-tRNA--protein transferase from Methylibium petroleiphilum (strain ATCC BAA-1232 / LMG 22953 / PM1).